The primary structure comprises 156 residues: Homeobox-leucine zipper protein ATHB-52 (156 aa).

Residues 8–67 constitute a DNA-binding region (homeobox); the sequence is GKNKKKRLTQDQVRQLEKCFTMNKKLEPDLKLQLSNQLGLPQRQVAVWFQNKRARFKTQS. A leucine-zipper region spans residues 68–96; that stretch reads LEVQHCTLQSKHEAALSDKAKLEHQVQFL.

This sequence belongs to the HD-ZIP homeobox family. Class I subfamily. Expressed in roots and flowers.

The protein localises to the nucleus. In terms of biological role, probable transcription factor. The protein is Homeobox-leucine zipper protein ATHB-52 (ATHB-52) of Arabidopsis thaliana (Mouse-ear cress).